The chain runs to 287 residues: Syntaxin-11 (287 aa).

A coiled-coil region spans residues 41–71; sequence LESLYRVIQDIQDENQLLLIDVRRLGRQNVR. Residues 204–266 enclose the t-SNARE coiled-coil homology domain; it reads LNEIESRHRE…GEAKAQVRKA (63 aa).

This sequence belongs to the syntaxin family. As to quaternary structure, interacts with the SNARE proteins SNAP-23 and VAMP.

The protein localises to the membrane. It is found in the golgi apparatus. Its subcellular location is the trans-Golgi network membrane. Functionally, SNARE that acts to regulate protein transport between late endosomes and the trans-Golgi network. This Mus musculus (Mouse) protein is Syntaxin-11 (Stx11).